A 489-amino-acid chain; its full sequence is Cytochrome P450 2C3 (489 aa).

Cys434 serves as a coordination point for heme.

The protein belongs to the cytochrome P450 family. Requires heme as cofactor.

The protein resides in the endoplasmic reticulum membrane. Its subcellular location is the microsome membrane. The enzyme catalyses an organic molecule + reduced [NADPH--hemoprotein reductase] + O2 = an alcohol + oxidized [NADPH--hemoprotein reductase] + H2O + H(+). In terms of biological role, cytochromes P450 are a group of heme-thiolate monooxygenases. In liver microsomes, this enzyme is involved in an NADPH-dependent electron transport pathway. It oxidizes a variety of structurally unrelated compounds, including steroids, fatty acids, and xenobiotics. This chain is Cytochrome P450 2C3 (CYP2C3), found in Oryctolagus cuniculus (Rabbit).